The chain runs to 494 residues: MLTSTSLYAAIDLGSNSFHMLVVREVAGSIQTLTRIKRKVRLAAGLNSDNSLSAEAMERGWQCLRLFAERLQDIPQPQICVVATATLRLAVNAGEFIAKAQEILGCPVQVISGEEEARLIYQGVAHTTGGADQRLVVDIGGASTELVTGTGAQTTSLFSLSMGCVTWLERYFTDRNLAQENFDEAEKAAREVLRPVADELRKHGWKVCVGASGTVQALQEIMMAQGMDERITLAKLQQLKQRAIHCGRLEELEIEGLTLERALVFPSGLAILIAIFTELDIQCMTLAGGALREGLVYGMLHLAVDQDIRSRTLRNIQRRFMVDTEQAHRVADLAVNFLDQVEDKWHLEPISRELLTSACQLHEIGLSVDFKQAPQHAAYLVRNLDLPGFTPAQKKLLATLLLNQTNPIDLSSLHQQNAVPPRVAEHLCRLLRLAIIFASRRRDDLVPQITLQAQDENLTLTLPQGWLEHHPLGKELIDQESQWQSYVHWPLDVH.

Belongs to the GppA/Ppx family. GppA subfamily.

It catalyses the reaction guanosine 3'-diphosphate 5'-triphosphate + H2O = guanosine 3',5'-bis(diphosphate) + phosphate + H(+). The protein operates within purine metabolism; ppGpp biosynthesis; ppGpp from GTP: step 2/2. Functionally, catalyzes the conversion of pppGpp to ppGpp. Guanosine pentaphosphate (pppGpp) is a cytoplasmic signaling molecule which together with ppGpp controls the 'stringent response', an adaptive process that allows bacteria to respond to amino acid starvation, resulting in the coordinated regulation of numerous cellular activities. The protein is Guanosine-5'-triphosphate,3'-diphosphate pyrophosphatase of Citrobacter koseri (strain ATCC BAA-895 / CDC 4225-83 / SGSC4696).